Here is a 223-residue protein sequence, read N- to C-terminus: Probable transaldolase (223 aa).

The active-site Schiff-base intermediate with substrate is Lys-86.

This sequence belongs to the transaldolase family. Type 3B subfamily.

It localises to the cytoplasm. It catalyses the reaction D-sedoheptulose 7-phosphate + D-glyceraldehyde 3-phosphate = D-erythrose 4-phosphate + beta-D-fructose 6-phosphate. Its pathway is carbohydrate degradation; pentose phosphate pathway; D-glyceraldehyde 3-phosphate and beta-D-fructose 6-phosphate from D-ribose 5-phosphate and D-xylulose 5-phosphate (non-oxidative stage): step 2/3. Functionally, transaldolase is important for the balance of metabolites in the pentose-phosphate pathway. This Thermoplasma acidophilum (strain ATCC 25905 / DSM 1728 / JCM 9062 / NBRC 15155 / AMRC-C165) protein is Probable transaldolase (tal).